Reading from the N-terminus, the 874-residue chain is MSIQSIVTKETLKKKDTNIEIQEKNMNDLVESASRVIAPLWPISTFAAHHPWMGLEKQSFEQVANWLKEARNVDIYPSASMIHSAKAKGEIEESFLQIGLSRWLDSQSFHIPRETAERFCQEALKLERLPSSLLSSPELNKLAEEISYINTGSMEDSSMQPISSLIENQKGDNLSDVLNYHIIKWCKLYLDDSGSSWTMPNREKGLYRAWHHLITFDPALSKNERKVLKDWPQDAQGALTKALSELGIPESNRQAYLEGHLLSLPGWAGMIRWRSQQSIKEQALVIEYLAVRISMELAIVKPYLPLKNQKAEKKVSIVPLIASWIYWGDISTREWLQMSATEQSELLAFAYRFDENTRKKLWLEAWEQTHAEQLKKKISSKQRATNDKKRVVAQLAFCIDVRSEPFRRHLEKLGPFETFGIAGFFGLPIATTELGSNNSHPSLPVILKPKHQIKELADENEYKSYEQRKKIDSSVSYTFKTMKKNVLTSMLLPEVSGPLLGLQMITRSFVPRRVGGFIRNLRKNMLQKPNTTFSLNHVHDTKCEIPIGFTKEEKVNYVRQALKMVGLTEKFAPLVVMCGHSSQSTNNPYAAALECGACGGAAGGFNARVFATLCNLPEVREALSAEGIKIPEDTIFAAAEHKTTVDELEWIYVPELSEAAQEAFDNIESVMPNVSQHANRERLTQLPNFKMKIKNPSKEAHRFAEDWSEIRPEWGLARNASFIIGQRELTQDCDLEGRAFLHNYDWKQDENGDILASIIAGPGTVAQWINLQYYASTVAPHYYGSGNKTTQTVTAGLGVMQGNASDLLSGLPWQSVMQSDSETYHSPLRLLIVIQAPTKYIERLLNNDFTFREKVQNGWVRLASVDSEGRWKNW.

4 residues coordinate Zn(2+): Cys-398, Asp-400, His-580, and Cys-595.

Belongs to the inorganic carbon transporter (TC 9.A.2) DabA family. In terms of assembly, forms a complex with DabB. Requires Zn(2+) as cofactor.

It is found in the cell membrane. Its function is as follows. Part of an energy-coupled inorganic carbon pump. This chain is Probable inorganic carbon transporter subunit DabA, found in Bacillus cereus (strain Q1).